An 810-amino-acid chain; its full sequence is Protein 4.1 (810 aa).

The segment at 1 to 124 (MTTEKSLVAE…KEIEFGTSLD (124 aa)) is disordered. Ser-14 bears the Phosphoserine mark. Thr-61 is modified (phosphothreonine). A compositionally biased stretch (basic and acidic residues) spans 62 to 76 (PTHEDLTKNKERTSE). Ser-85, Ser-86, Ser-96, Ser-105, Ser-122, Ser-150, Ser-152, Ser-153, Ser-189, and Ser-192 each carry phosphoserine. The segment covering 102-118 (DVESAKEKCEGGQKEIE) has biased composition (basic and acidic residues). A disordered region spans residues 152-203 (SSAETQPAQEEHREDPDFETKEGGGLEECSKIEVKEESPESKAERELKASQK). A compositionally biased stretch (basic and acidic residues) spans 160–200 (QEEHREDPDFETKEGGGLEECSKIEVKEESPESKAERELKA). In terms of domain architecture, FERM spans 211 to 492 (MHCKVSLLDD…EHHTFFRLTS (282 aa)). Residue Tyr-223 is modified to Phosphotyrosine. Phosphothreonine is present on Thr-379. The interval 518–613 (TRQASALIDR…DQAEPEPTEV (96 aa)) is disordered. 4 positions are modified to phosphoserine: Ser-522, Ser-541, Ser-543, and Ser-555. Residues 587 to 601 (AQKETVKDEEKKEEG) are compositionally biased toward basic and acidic residues. A spectrin--actin-binding region spans residues 615–659 (KDLDKSQEEIKKHHASISELKKNFMESVPEPRPSEWDKRLSTHSP). Phosphoserine is present on residues Ser-620, Ser-630, Ser-655, and Ser-658. The segment at 660–810 (FRTLNINGQL…VHQETEISEE (151 aa)) is C-terminal (CTD). Residues Thr-682 and Thr-805 each carry the phosphothreonine modification.

In terms of assembly, binds with a high affinity to glycophorin and with lower affinity to band III protein. Associates with the nuclear mitotic apparatus. Binds calmodulin, CPAP and DLG1. Also found to associate with contractile apparatus and tight junctions. Interacts with NUMA1; this interaction is negatively regulated by CDK1 during metaphase and promotes for anaphase-specific localization of NUMA1 in symmetrically dividing cells. Interacts with ATP2B1; regulates small intestinal calcium absorption through regulation of membrane expression of ATP2B1. O-glycosylated; contains N-acetylglucosamine side chains in the C-terminal domain. Post-translationally, phosphorylated at multiple sites by different protein kinases and each phosphorylation event selectively modulates the protein's functions.

The protein localises to the nucleus. Its subcellular location is the cytoplasm. The protein resides in the cytoskeleton. It localises to the cell cortex. In terms of biological role, protein 4.1 is a major structural element of the erythrocyte membrane skeleton. It plays a key role in regulating membrane physical properties of mechanical stability and deformability by stabilizing spectrin-actin interaction. Recruits DLG1 to membranes. Required for dynein-dynactin complex and NUMA1 recruitment at the mitotic cell cortex during anaphase. This Canis lupus familiaris (Dog) protein is Protein 4.1.